The sequence spans 303 residues: Probable cell division protein WhiA (303 aa).

The segment at residues 272 to 303 is a DNA-binding region (H-T-H motif); sequence SIQQLADSLSTPLTKSGVNHRLRKINKIADEL.

The protein belongs to the WhiA family.

In terms of biological role, involved in cell division and chromosome segregation. This Streptococcus pneumoniae serotype 4 (strain ATCC BAA-334 / TIGR4) protein is Probable cell division protein WhiA.